The following is a 361-amino-acid chain: Peptide chain release factor 1 (361 aa).

The residue at position 237 (glutamine 237) is an N5-methylglutamine. Residues 284 to 296 (EDEKRRSEEDSTR) show a composition bias toward basic and acidic residues. Positions 284 to 305 (EDEKRRSEEDSTRRNLVSSGDR) are disordered.

The protein belongs to the prokaryotic/mitochondrial release factor family. Methylated by PrmC. Methylation increases the termination efficiency of RF1.

The protein resides in the cytoplasm. In terms of biological role, peptide chain release factor 1 directs the termination of translation in response to the peptide chain termination codons UAG and UAA. The protein is Peptide chain release factor 1 of Shewanella piezotolerans (strain WP3 / JCM 13877).